The primary structure comprises 1337 residues: GTPase activating protein homolog 3 (1337 aa).

The F-BAR domain maps to 14–264; sequence PESFADLWDG…LINSINNEDE (251 aa). Disordered regions lie at residues 279–328 and 345–392; these read PKPF…LPIF and ITNS…RFST. The segment covering 293-302 has biased composition (pro residues); it reads TPPPPPPPQI. Residues 345–358 are compositionally biased toward polar residues; sequence ITNSLSLSSDSLQT. Positions 422 to 611 constitute a Rho-GAP domain; sequence CKIEDIMVAQ…NIIEHFKPLQ (190 aa). Disordered regions lie at residues 612–689, 733–781, and 794–821; these read VNDS…TTNT, VNNN…HTVA, and ITTP…SPSE. Composition is skewed to low complexity over residues 621-637, 645-687, and 734-772; these read SSSS…SIES, SSTN…SSTT, and NNNN…QQVS. A coiled-coil region spans residues 830 to 859; the sequence is YLEDQERCKQRIDELHTQVNELYSDITTIE. Disordered stretches follow at residues 1041–1102 and 1114–1166; these read SDPD…INNS and KSAL…AHAI. Over residues 1047 to 1063 the composition is skewed to polar residues; that stretch reads SPPTISNTTNRLLNTSG. Low complexity-rich tracts occupy residues 1064 to 1102 and 1114 to 1159; these read STDF…INNS and KSAL…TTTN. Positions 1189-1219 form a coiled coil; sequence LEINNKLHSQLTEELKKKQQQYKQLIFDIID.

Its subcellular location is the cytoplasm. The protein localises to the contractile vacuole. Functionally, rho GTPase-activating protein involved in the signal transduction pathway. The sequence is that of GTPase activating protein homolog 3 (mgp3) from Dictyostelium discoideum (Social amoeba).